The chain runs to 350 residues: Zona pellucida-binding protein 1 (350 aa).

A signal peptide spans 1–38 (MEASAPDRARRGWRRARAAASPLSRAAVVLLLSALVLR). N-linked (GlcNAc...) asparagine glycans are attached at residues asparagine 113, asparagine 186, and asparagine 339.

It belongs to the zona pellucida-binding protein Sp38 family. Post-translationally, N-glycosylated. Expressed in testis. Detected in sperm cells.

The protein resides in the cytoplasmic vesicle. It localises to the secretory vesicle. It is found in the acrosome. Its subcellular location is the secreted. The protein localises to the acrosome membrane. Plays a role in acrosome compaction and sperm morphogenesis. Is implicated in sperm-oocyte interaction during fertilization. In Sus scrofa (Pig), this protein is Zona pellucida-binding protein 1 (ZPBP).